Consider the following 272-residue polypeptide: Dermonecrotic toxin SpeSicTox-betaIB1b (272 aa).

Residue histidine 5 is part of the active site. Positions 25 and 27 each coordinate Mg(2+). The active-site Nucleophile is the histidine 41. Cystine bridges form between cysteine 45–cysteine 51 and cysteine 47–cysteine 191. Position 85 (aspartate 85) interacts with Mg(2+).

It belongs to the arthropod phospholipase D family. Class II subfamily. Mg(2+) serves as cofactor. Expressed by the venom gland.

The protein resides in the secreted. The enzyme catalyses an N-(acyl)-sphingosylphosphocholine = an N-(acyl)-sphingosyl-1,3-cyclic phosphate + choline. It catalyses the reaction an N-(acyl)-sphingosylphosphoethanolamine = an N-(acyl)-sphingosyl-1,3-cyclic phosphate + ethanolamine. The catalysed reaction is a 1-acyl-sn-glycero-3-phosphocholine = a 1-acyl-sn-glycero-2,3-cyclic phosphate + choline. It carries out the reaction a 1-acyl-sn-glycero-3-phosphoethanolamine = a 1-acyl-sn-glycero-2,3-cyclic phosphate + ethanolamine. Functionally, dermonecrotic toxins cleave the phosphodiester linkage between the phosphate and headgroup of certain phospholipids (sphingolipid and lysolipid substrates), forming an alcohol (often choline) and a cyclic phosphate. This toxin acts on sphingomyelin (SM). It may also act on ceramide phosphoethanolamine (CPE), lysophosphatidylcholine (LPC) and lysophosphatidylethanolamine (LPE), but not on lysophosphatidylserine (LPS), and lysophosphatidylglycerol (LPG). It acts by transphosphatidylation, releasing exclusively cyclic phosphate products as second products. Induces dermonecrosis, hemolysis, increased vascular permeability, edema, inflammatory response, and platelet aggregation. In Sicarius peruensis (Six-eyed sand spider), this protein is Dermonecrotic toxin SpeSicTox-betaIB1b.